Here is a 339-residue protein sequence, read N- to C-terminus: Anthranilate phosphoribosyltransferase (339 aa).

5-phospho-alpha-D-ribose 1-diphosphate is bound by residues Gly-80, 83 to 84 (GD), Thr-88, 90 to 93 (NIST), 108 to 116 (KHGNRSVSS), and Ser-120. Gly-80 is an anthranilate binding site. Ser-92 provides a ligand contact to Mg(2+). Asn-111 is a binding site for anthranilate. Arg-166 contacts anthranilate. Mg(2+) is bound by residues Asp-225 and Glu-226.

This sequence belongs to the anthranilate phosphoribosyltransferase family. As to quaternary structure, homodimer. Requires Mg(2+) as cofactor.

The catalysed reaction is N-(5-phospho-beta-D-ribosyl)anthranilate + diphosphate = 5-phospho-alpha-D-ribose 1-diphosphate + anthranilate. It functions in the pathway amino-acid biosynthesis; L-tryptophan biosynthesis; L-tryptophan from chorismate: step 2/5. Catalyzes the transfer of the phosphoribosyl group of 5-phosphorylribose-1-pyrophosphate (PRPP) to anthranilate to yield N-(5'-phosphoribosyl)-anthranilate (PRA). The protein is Anthranilate phosphoribosyltransferase of Desulfosudis oleivorans (strain DSM 6200 / JCM 39069 / Hxd3) (Desulfococcus oleovorans).